A 105-amino-acid chain; its full sequence is uncharacterized protein (105 aa).

The chain crosses the membrane as a helical span at residues Ile64–Ile84.

The protein localises to the membrane. This is an uncharacterized protein from Saccharomyces cerevisiae (strain ATCC 204508 / S288c) (Baker's yeast).